Reading from the N-terminus, the 77-residue chain is Large ribosomal subunit protein bL31 (77 aa).

Belongs to the bacterial ribosomal protein bL31 family. Type A subfamily. As to quaternary structure, part of the 50S ribosomal subunit.

Its function is as follows. Binds the 23S rRNA. This chain is Large ribosomal subunit protein bL31, found in Microcystis aeruginosa (strain NIES-843 / IAM M-2473).